The following is a 346-amino-acid chain: [LysW]-lysine/[LysW]-ornithine hydrolase (346 aa).

Position 67 (histidine 67) interacts with Zn(2+). The active site involves aspartate 69. Aspartate 91 contributes to the Zn(2+) binding site. The active-site Proton acceptor is the glutamate 121. Zn(2+) is bound by residues glutamate 122, glutamate 145, and histidine 316.

Belongs to the peptidase M20A family. LysK subfamily. Requires Zn(2+) as cofactor. It depends on Co(2+) as a cofactor.

It localises to the cytoplasm. The catalysed reaction is [amino-group carrier protein]-C-terminal-gamma-(L-lysyl)-L-glutamate + H2O = [amino-group carrier protein]-C-terminal-L-glutamate + L-lysine. The enzyme catalyses [amino-group carrier protein]-C-terminal-gamma-(L-ornithyl)-L-glutamate + H2O = [amino-group carrier protein]-C-terminal-L-glutamate + L-ornithine. The protein operates within amino-acid biosynthesis; L-lysine biosynthesis via AAA pathway; L-lysine from L-alpha-aminoadipate (Thermus route): step 5/5. It functions in the pathway amino-acid biosynthesis; L-arginine biosynthesis. Its function is as follows. Catalyzes the release of L-lysine from [LysW]-gamma-L-lysine and the release of L-ornithine from [LysW]-L-ornithine. The sequence is that of [LysW]-lysine/[LysW]-ornithine hydrolase from Sulfurisphaera tokodaii (strain DSM 16993 / JCM 10545 / NBRC 100140 / 7) (Sulfolobus tokodaii).